The following is a 1781-amino-acid chain: Signal-induced proliferation-associated 1-like protein 3 (1781 aa).

Disordered stretches follow at residues 45 to 166 (SMSQ…FLPL) and 239 to 332 (TELL…EASR). Positions 54 to 73 (PATATATATATTRPSPTTPA) are enriched in low complexity. A compositionally biased stretch (basic and acidic residues) spans 87–97 (PPKREALREHS). S100 bears the Phosphoserine mark. Residues 118–135 (RSIQNGQPPTSTPASSGS) are compositionally biased toward polar residues. Residues 137–146 (AFHRLSRRRS) are compositionally biased toward basic residues. A Phosphoserine modification is found at S146. S401 bears the Phosphoserine mark. One can recognise a Rap-GAP domain in the interval 611-828 (LLKLDEQGLC…RTRQEYLKDL (218 aa)). Positions 966–1042 (DMTLRRNGLG…VKVVIIPPFE (77 aa)) constitute a PDZ domain. 4 disordered regions span residues 1046-1112 (PRRG…SLSR), 1124-1221 (ESQP…QKPE), 1236-1565 (AGSS…GLEP), and 1583-1636 (TLPA…RLDP). Composition is skewed to polar residues over residues 1080 to 1111 (APWQ…QSLS) and 1157 to 1166 (PSGSFSTPGS). Over residues 1196–1210 (DGTSSGDSSSGGLTS) the composition is skewed to low complexity. Basic and acidic residues predominate over residues 1245-1261 (SRQDAAGKDSPNRHSKG). The segment covering 1266 to 1281 (SSHSSSNTLSSNASSS) has biased composition (low complexity). The segment covering 1304 to 1322 (GGSSDSGIDTTLYTSSPSC) has biased composition (polar residues). S1364 is modified (phosphoserine). T1387 carries the post-translational modification Phosphothreonine. Positions 1425–1441 (RPSQLAQPSPFQLSASV) are enriched in polar residues. K1448 is subject to N6-acetyllysine. Positions 1509 to 1518 (TIEDDLKKLI) are enriched in basic and acidic residues. The span at 1532-1547 (GQSPQKGLQRTLSDES) shows a compositional bias: polar residues. Residues S1544 and S1547 each carry the phosphoserine modification. Positions 1599-1609 (PGATPAAGSGF) are enriched in low complexity. A phosphoserine mark is found at S1619 and S1622. Positions 1625 to 1635 (DGRDRPLRRLD) are enriched in basic and acidic residues. Residue S1677 is modified to Phosphoserine. Residues 1685–1712 (SPVHSHLSLERGPPTPRTTPTMSEEPPL) are disordered. Residues T1699 and T1703 each carry the phosphothreonine modification. Residues 1720-1774 (QLEVMLKQLHTDLQKEKQDKVVLQSEVASLRQNNQRLQEESQAASEQLRKFAEIF) adopt a coiled-coil conformation.

It localises to the apical cell membrane. In terms of biological role, plays a critical role in epithelial cell morphogenesis, polarity, adhesion and cytoskeletal organization in the lens. This is Signal-induced proliferation-associated 1-like protein 3 (SIPA1L3) from Homo sapiens (Human).